The following is a 666-amino-acid chain: Calpain-10 (666 aa).

The region spanning 13–321 (LFRDAAFPAS…FDEVTIGYPV (309 aa)) is the Calpain catalytic domain. Catalysis depends on residues C73, H238, and N263. Domain III stretches follow at residues 322 to 488 (TEAG…ISLS) and 507 to 648 (EWET…IHSQ).

The protein belongs to the peptidase C2 family.

Its function is as follows. Calcium-regulated non-lysosomal thiol-protease which catalyzes limited proteolysis of substrates involved in cytoskeletal remodeling and signal transduction. May play a role in insulin-stimulated glucose uptake. In Mus musculus (Mouse), this protein is Calpain-10 (Capn10).